The primary structure comprises 346 residues: 3',5'-cyclic-nucleotide phosphodiesterase (346 aa).

It belongs to the cyclic nucleotide phosphodiesterase class-II family.

The enzyme catalyses a nucleoside 3',5'-cyclic phosphate + H2O = a nucleoside 5'-phosphate + H(+). The polypeptide is 3',5'-cyclic-nucleotide phosphodiesterase (cgs2) (Schizosaccharomyces pombe (strain 972 / ATCC 24843) (Fission yeast)).